The sequence spans 125 residues: Large ribosomal subunit protein uL30 (125 aa).

The large ribosomal subunit protein uL30 stretch occupies residues 1-61; sequence MSKLKVKLLR…HLVGVAYRID (61 aa). The interval 62–125 is unknown; sequence FSGDIPTVER…KNWKGEEVEL (64 aa).

The protein belongs to the universal ribosomal protein uL30 family. In terms of assembly, part of the 50S ribosomal subunit.

The polypeptide is Large ribosomal subunit protein uL30 (Aquifex aeolicus (strain VF5)).